A 331-amino-acid chain; its full sequence is Ketol-acid reductoisomerase (NADP(+)) (331 aa).

Residues 2-181 (TKVYYEDAVK…GATRAGVIET (180 aa)) enclose the KARI N-terminal Rossmann domain. NADP(+)-binding positions include 25-28 (YGSQ), Arg-48, Ser-52, and 82-85 (DETQ). His-107 is a catalytic residue. Gly-133 serves as a coordination point for NADP(+). In terms of domain architecture, KARI C-terminal knotted spans 182–327 (TFKEETETDL…AELREMMPFV (146 aa)). Residues Asp-190, Glu-194, Glu-226, and Glu-230 each contribute to the Mg(2+) site. Position 251 (Ser-251) interacts with substrate.

It belongs to the ketol-acid reductoisomerase family. Requires Mg(2+) as cofactor.

The enzyme catalyses (2R)-2,3-dihydroxy-3-methylbutanoate + NADP(+) = (2S)-2-acetolactate + NADPH + H(+). It catalyses the reaction (2R,3R)-2,3-dihydroxy-3-methylpentanoate + NADP(+) = (S)-2-ethyl-2-hydroxy-3-oxobutanoate + NADPH + H(+). It functions in the pathway amino-acid biosynthesis; L-isoleucine biosynthesis; L-isoleucine from 2-oxobutanoate: step 2/4. The protein operates within amino-acid biosynthesis; L-valine biosynthesis; L-valine from pyruvate: step 2/4. Its function is as follows. Involved in the biosynthesis of branched-chain amino acids (BCAA). Catalyzes an alkyl-migration followed by a ketol-acid reduction of (S)-2-acetolactate (S2AL) to yield (R)-2,3-dihydroxy-isovalerate. In the isomerase reaction, S2AL is rearranged via a Mg-dependent methyl migration to produce 3-hydroxy-3-methyl-2-ketobutyrate (HMKB). In the reductase reaction, this 2-ketoacid undergoes a metal-dependent reduction by NADPH to yield (R)-2,3-dihydroxy-isovalerate. This is Ketol-acid reductoisomerase (NADP(+)) from Listeria innocua serovar 6a (strain ATCC BAA-680 / CLIP 11262).